Reading from the N-terminus, the 429-residue chain is Phosphomethylpyrimidine synthase (429 aa).

Substrate is bound by residues Asn-66, Met-95, Tyr-124, His-163, 185–187 (SRG), 226–229 (DGLR), and Glu-265. Residue His-269 participates in Zn(2+) binding. Position 292 (Tyr-292) interacts with substrate. His-333 is a Zn(2+) binding site. Residues Cys-407, Cys-410, and Cys-414 each coordinate [4Fe-4S] cluster.

The protein belongs to the ThiC family. The cofactor is [4Fe-4S] cluster.

The catalysed reaction is 5-amino-1-(5-phospho-beta-D-ribosyl)imidazole + S-adenosyl-L-methionine = 4-amino-2-methyl-5-(phosphooxymethyl)pyrimidine + CO + 5'-deoxyadenosine + formate + L-methionine + 3 H(+). It participates in cofactor biosynthesis; thiamine diphosphate biosynthesis. Functionally, catalyzes the synthesis of the hydroxymethylpyrimidine phosphate (HMP-P) moiety of thiamine from aminoimidazole ribotide (AIR) in a radical S-adenosyl-L-methionine (SAM)-dependent reaction. This Pyrococcus furiosus (strain ATCC 43587 / DSM 3638 / JCM 8422 / Vc1) protein is Phosphomethylpyrimidine synthase.